Here is a 321-residue protein sequence, read N- to C-terminus: Ribosomal protein L11 methyltransferase (321 aa).

S-adenosyl-L-methionine contacts are provided by Thr150, Gly171, Asp193, and Asn256.

It belongs to the methyltransferase superfamily. PrmA family.

The protein localises to the cytoplasm. The enzyme catalyses L-lysyl-[protein] + 3 S-adenosyl-L-methionine = N(6),N(6),N(6)-trimethyl-L-lysyl-[protein] + 3 S-adenosyl-L-homocysteine + 3 H(+). Its function is as follows. Methylates ribosomal protein L11. This Herpetosiphon aurantiacus (strain ATCC 23779 / DSM 785 / 114-95) protein is Ribosomal protein L11 methyltransferase.